Consider the following 249-residue polypeptide: Neurotrophic factor BDNF precursor form (249 aa).

An N-terminal signal peptide occupies residues 1-18 (MTILFLTMVISYFGCMKA). Residues 19–130 (APMKEANVHG…AANMSMRVRR (112 aa)) constitute a propeptide that is removed on maturation. Residue N123 is glycosylated (N-linked (GlcNAc...) asparagine). Disulfide bonds link C143–C210, C188–C239, and C198–C241.

This sequence belongs to the NGF-beta family. In terms of assembly, monomers and homodimers. Binds to NTRK2/TRKB. Can form heterodimers with other neurotrophin family members, such as NTF3 and NTF4 (in vitro), but the physiological relevance of this is not clear. BDNF precursor form: interacts with the heterodimer formed by NGFR and SORCS2. Mature BDNF has much lower affinity for the heterodimer formed by NGFR and SORCS2. Post-translationally, N-glycosylated and glycosulfated, contrary to mature BDNF. Mature BDNF is produced by proteolytic removal of the propeptide, catalyzed by a FURIN family member. In addition, the precursor form is proteolytically cleaved within the propeptide, but this is not an obligatory intermediate for the production of mature BDNF. Can be converted into mature BDNF by plasmin (PLG).

The protein localises to the secreted. Functionally, important signaling molecule that activates signaling cascades downstream of NTRK2. During development, promotes the survival and differentiation of selected neuronal populations of the peripheral and central nervous systems. Participates in axonal growth, pathfinding and in the modulation of dendritic growth and morphology. Major regulator of synaptic transmission and plasticity at adult synapses in many regions of the CNS. The versatility of BDNF is emphasized by its contribution to a range of adaptive neuronal responses including long-term potentiation (LTP), long-term depression (LTD), certain forms of short-term synaptic plasticity, as well as homeostatic regulation of intrinsic neuronal excitability. Important signaling molecule that activates signaling cascades downstream of NTRK2. Activates signaling cascades via the heterodimeric receptor formed by NGFR and SORCS2. Signaling via NGFR and SORCS2 plays a role in synaptic plasticity and long-term depression (LTD). Binding to NGFR and SORCS2 promotes neuronal apoptosis. Promotes neuronal growth cone collapse. This is Neurotrophic factor BDNF precursor form (Bdnf) from Rattus norvegicus (Rat).